The following is a 390-amino-acid chain: O-glycoside alpha-1,2-mannosyltransferase omh1 (390 aa).

The Nucleophile role is filled by glutamate 279.

It belongs to the glycosyltransferase 15 family.

It localises to the endoplasmic reticulum. It is found in the golgi apparatus. Its function is as follows. Mannosyltransferase involved in O-glycosylation of cell wall and secreted proteins. Plays a major role in extending alpha-1,2-linked mannose in the O-glycan pathway. This Schizosaccharomyces pombe (strain 972 / ATCC 24843) (Fission yeast) protein is O-glycoside alpha-1,2-mannosyltransferase omh1 (omh1).